The primary structure comprises 448 residues: U1 small nuclear ribonucleoprotein 70 kDa (448 aa).

The segment at 91 to 201 is required for interaction with U1 RNA; sequence TEIKNATEDP…GGGLGGTRRG (111 aa). Positions 102-180 constitute an RRM domain; it reads RTLFIARINY…KRVLVDVERA (79 aa). A disordered region spans residues 188 to 448; the sequence is PRRLGGGLGG…SSGDPSWWRQ (261 aa). Gly residues predominate over residues 191-200; the sequence is LGGGLGGTRR. 2 stretches are compositionally biased toward basic and acidic residues: residues 206–234 and 262–272; these read NIKH…REGP and ERRDRERDRGR. Positions 281 to 293 are enriched in basic residues; that stretch reads SRSRSRERRKRRA. Basic and acidic residues-rich tracts occupy residues 294-320 and 346-376; these read GSRE…DRER and RDRE…IKEE. Residues 405–425 form a mediates binding to Psi region; sequence RPPPAHHNMFSVPPPPILGRG. A compositionally biased stretch (polar residues) spans 426 to 448; the sequence is NASTNPNPDNGQQSSGDPSWWRQ.

In terms of assembly, component of the U1 snRNP. Interacts with Psi; essential for alternative splicing of P-element transposase. Interacts with the SMN complex.

The protein localises to the nucleus speckle. It localises to the nucleus. The protein resides in the nucleoplasm. In terms of biological role, mediates the splicing of pre-mRNA by binding to the stem loop I region of U1-snRNA. Required during oogenesis for nurse cell chromatin dispersal. The chain is U1 small nuclear ribonucleoprotein 70 kDa (snRNP-U1-70K) from Drosophila melanogaster (Fruit fly).